A 353-amino-acid polypeptide reads, in one-letter code: Methionine import ATP-binding protein MetN (353 aa).

The ABC transporter domain occupies 8–249 (LDQIDVTFHQ…PKQPLTQDFI (242 aa)). Position 42–49 (42–49 (GYSGAGKS)) interacts with ATP.

The protein belongs to the ABC transporter superfamily. Methionine importer (TC 3.A.1.24) family. The complex is composed of two ATP-binding proteins (MetN), two transmembrane proteins (MetI) and a solute-binding protein (MetQ).

It localises to the cell membrane. The catalysed reaction is L-methionine(out) + ATP + H2O = L-methionine(in) + ADP + phosphate + H(+). It carries out the reaction D-methionine(out) + ATP + H2O = D-methionine(in) + ADP + phosphate + H(+). In terms of biological role, part of the ABC transporter complex MetNIQ involved in methionine import. Responsible for energy coupling to the transport system. The protein is Methionine import ATP-binding protein MetN of Streptococcus pneumoniae serotype 4 (strain ATCC BAA-334 / TIGR4).